A 137-amino-acid chain; its full sequence is Nucleoside diphosphate kinase (137 aa).

Residues Lys-9, Phe-57, Arg-85, Thr-91, Arg-102, and Asn-112 each contribute to the ATP site. Residue His-115 is the Pros-phosphohistidine intermediate of the active site.

The protein belongs to the NDK family. Homotetramer. Requires Mg(2+) as cofactor.

Its subcellular location is the cytoplasm. The enzyme catalyses a 2'-deoxyribonucleoside 5'-diphosphate + ATP = a 2'-deoxyribonucleoside 5'-triphosphate + ADP. It carries out the reaction a ribonucleoside 5'-diphosphate + ATP = a ribonucleoside 5'-triphosphate + ADP. Major role in the synthesis of nucleoside triphosphates other than ATP. The ATP gamma phosphate is transferred to the NDP beta phosphate via a ping-pong mechanism, using a phosphorylated active-site intermediate. The sequence is that of Nucleoside diphosphate kinase from Leptospira borgpetersenii serovar Hardjo-bovis (strain L550).